Reading from the N-terminus, the 184-residue chain is Regulatory protein RecX (184 aa).

A disordered region spans residues 1 to 21 (MTLFPLPSTSDPAEADESTKR).

The protein belongs to the RecX family.

It localises to the cytoplasm. Its function is as follows. Modulates RecA activity. The sequence is that of Regulatory protein RecX from Mycolicibacterium vanbaalenii (strain DSM 7251 / JCM 13017 / BCRC 16820 / KCTC 9966 / NRRL B-24157 / PYR-1) (Mycobacterium vanbaalenii).